Consider the following 235-residue polypeptide: PRA1 family protein 1 (235 aa).

The span at 1–17 (MESNSNSNETMYGNPNI) shows a compositional bias: polar residues. A disordered region spans residues 1 to 55 (MESNSNSNETMYGNPNINMGFVDSGNSNIGNNTGSMSPPPQQQQQPQQASSTPAG). Residues 24–48 (SGNSNIGNNTGSMSPPPQQQQQPQQ) show a composition bias toward low complexity. 2 helical membrane-spanning segments follow: residues 144 to 164 (SVFFIITNPFYLLLLGVLLFI) and 187 to 207 (AFLSIYFLLYAGSSIFWLVGA).

This sequence belongs to the PRA1 family.

It localises to the membrane. Its function is as follows. May act as a general Rab protein regulator. The sequence is that of PRA1 family protein 1 (prafA) from Dictyostelium discoideum (Social amoeba).